A 298-amino-acid chain; its full sequence is Cyclic dof factor 1 (298 aa).

The disordered stretch occupies residues 27-46 (EEEEKNQNKTLTDQSEKDKT). A Dof-type zinc finger spans residues 54 to 108 (LPCPRCNSMETKFCYYNNYNVNQPRHFCKACQRYWTSGGTMRSVPIGAGRRKNKN). 4 residues coordinate Zn(2+): Cys-56, Cys-59, Cys-81, and Cys-84. The disordered stretch occupies residues 200-231 (SSSPTSTLGKHSRDEDETVKQKQRNGSVLVPK). Positions 210 to 219 (HSRDEDETVK) are enriched in basic and acidic residues.

In terms of assembly, interacts with ADO2 (via kelch repeats), ADO3 (via kelch repeats) and GI (via N-terminus). Ubiquitinated. In terms of tissue distribution, expressed in the vascular tissues of cotyledons, leaves and hypocotyls and in stomata. Not detected in roots.

The protein resides in the nucleus. Its function is as follows. Transcription factor that binds specifically to a 5'-AA[AG]G-3' consensus core sequence. A flanking TGT sequence contributes to the specificity of binding. Regulates a photoperiodic flowering response. Transcriptional repressor of 'CONSTANS' expression. The DNA-binding ability is not modulated by 'GIGANTEA' but the stability of CDF1 is controlled by the proteasome-dependent pathway. Ubiquitinated by the SCF(ADO3) E3 ubiquitin ligase complex. Binds to the FT promoter in the morning. This is Cyclic dof factor 1 (CDF1) from Arabidopsis thaliana (Mouse-ear cress).